The sequence spans 130 residues: Small ribosomal subunit protein uS9 (130 aa).

The segment at 98–130 (LKKAGMLTRDPRMKERKKYGLKKARKASQFSKR) is disordered. Over residues 111–130 (KERKKYGLKKARKASQFSKR) the composition is skewed to basic residues.

This sequence belongs to the universal ribosomal protein uS9 family.

The protein is Small ribosomal subunit protein uS9 of Lacticaseibacillus casei (strain BL23) (Lactobacillus casei).